Reading from the N-terminus, the 489-residue chain is MAGKITVVGLGAGDMDQLTIGIHKLLTKADTLYVRTKDHPLIEELEKETKNIRFFDDIYEKHDQFEAVYEEIADILFEAARREDVVYAVPGHPFVAEKTVQLLTERQEKENVQVKVAGGQSFLDATFNVLQIDPIEGFQFVDAGTLSADELELRHHLIICQVYDQMTASEVKLTLMEKLPDDYEVVIVTAAGSRGEEIRTVPLFELDRNVALNNLTSVYIPPIKEEKLLYHEFSTFRSIIRELRGPNGCPWDKKQTHQSLKQYMIEECYELLEAIDEEDTDHMIEELGDVLLQVLLHAQIGEDEGYFTIDDVIKGISEKMVRRHPHVFKDVKVQDENDVLANWEDIKKAEKNTSESSLLDSVPKTLPALSKAAKLQKKAAKVGFDWEDVSDIWEKVSEEMKEFSSEVSEAPHEHNLKAEFGDILFALVNVARFYKIEPEEALTMTNDKFRRRFSYIEETAKEEGVELADMSLEDMDKLWNEAKETERRS.

This is an uncharacterized protein from Bacillus subtilis (strain 168).